We begin with the raw amino-acid sequence, 1847 residues long: Cilia- and flagella-associated protein 65 (1847 aa).

Residues Phe112–Ile132 traverse the membrane as a helical segment. Positions Asp805–Met914 constitute an MSP domain. Positions Gln1457–Thr1483 form a coiled coil. The segment at Tyr1668–Lys1721 is disordered. Acidic residues predominate over residues Gln1688–Asp1720.

The protein belongs to the CFAP65 family. Interacts with CFAP47. Predominantly expressed in testis. Highly expressed in round and elongating spermatids. Expressed also in certain ciliated organs, such as the brain, lung and kidney.

Its subcellular location is the cell projection. It is found in the cilium. It localises to the flagellum membrane. The protein localises to the cytoplasmic vesicle. The protein resides in the secretory vesicle. Its subcellular location is the acrosome membrane. It is found in the cytoplasm. Its function is as follows. Plays a role in flagellar formation and sperm motility. This Mus musculus (Mouse) protein is Cilia- and flagella-associated protein 65.